The following is a 341-amino-acid chain: UDP-3-O-acylglucosamine N-acyltransferase (341 aa).

Residue H239 is the Proton acceptor of the active site.

The protein belongs to the transferase hexapeptide repeat family. LpxD subfamily. Homotrimer.

The catalysed reaction is a UDP-3-O-[(3R)-3-hydroxyacyl]-alpha-D-glucosamine + a (3R)-hydroxyacyl-[ACP] = a UDP-2-N,3-O-bis[(3R)-3-hydroxyacyl]-alpha-D-glucosamine + holo-[ACP] + H(+). The protein operates within bacterial outer membrane biogenesis; LPS lipid A biosynthesis. Its function is as follows. Catalyzes the N-acylation of UDP-3-O-acylglucosamine using 3-hydroxyacyl-ACP as the acyl donor. Is involved in the biosynthesis of lipid A, a phosphorylated glycolipid that anchors the lipopolysaccharide to the outer membrane of the cell. The protein is UDP-3-O-acylglucosamine N-acyltransferase of Shewanella oneidensis (strain ATCC 700550 / JCM 31522 / CIP 106686 / LMG 19005 / NCIMB 14063 / MR-1).